Reading from the N-terminus, the 493-residue chain is NAD(P)H-quinone oxidoreductase chain 4, chloroplastic (493 aa).

14 helical membrane passes run Phe4–Leu24, Trp34–Tyr54, Met87–Ile107, Pro111–Ser131, Leu134–Leu154, Phe167–Phe187, Ile212–Thr232, His242–Ile262, Phe276–Leu296, Met313–Cys333, Gln334–Asp354, Ser385–Ile405, Phe417–Leu437, and Val462–Leu482.

The protein belongs to the complex I subunit 4 family.

The protein resides in the plastid. It localises to the chloroplast thylakoid membrane. It catalyses the reaction a plastoquinone + NADH + (n+1) H(+)(in) = a plastoquinol + NAD(+) + n H(+)(out). The enzyme catalyses a plastoquinone + NADPH + (n+1) H(+)(in) = a plastoquinol + NADP(+) + n H(+)(out). This chain is NAD(P)H-quinone oxidoreductase chain 4, chloroplastic, found in Chara vulgaris (Common stonewort).